Consider the following 448-residue polypeptide: Antizyme inhibitor 1 (448 aa).

The protein belongs to the Orn/Lys/Arg decarboxylase class-II family. ODC antizyme inhibitor subfamily. Monomer. Interacts with OAZ1 and OAZ3; this interaction disrupts the interaction between the antizyme and ODC1. Post-translationally, ubiquitinated, leading to its proteasomal degradation; a process that is reduced in presence of antizyme OAZ1. Expressed during testis development.

The protein localises to the nucleus. In terms of biological role, antizyme inhibitor (AZI) protein that positively regulates ornithine decarboxylase (ODC) activity and polyamine uptake. AZI is an enzymatically inactive ODC homolog that counteracts the negative effect of ODC antizymes (AZs) OAZ1, OAZ2 and OAZ3 on ODC activity by competing with ODC for antizyme-binding. Inhibits antizyme-dependent ODC degradation and releases ODC monomers from their inactive complex with antizymes, leading to formation of the catalytically active ODC homodimer and restoring polyamine production. In Mus musculus (Mouse), this protein is Antizyme inhibitor 1 (Azin1).